Reading from the N-terminus, the 294-residue chain is Cytidine deaminase (294 aa).

2 consecutive CMP/dCMP-type deaminase domains span residues 48 to 168 (DEDA…FGPK) and 186 to 294 (LTGD…VLLA). 89–91 (NME) is a binding site for substrate. Zn(2+) is bound at residue His102. Catalysis depends on Glu104, which acts as the Proton donor. Residues Cys129 and Cys132 each contribute to the Zn(2+) site.

This sequence belongs to the cytidine and deoxycytidylate deaminase family. Homodimer. Zn(2+) is required as a cofactor.

The catalysed reaction is cytidine + H2O + H(+) = uridine + NH4(+). The enzyme catalyses 2'-deoxycytidine + H2O + H(+) = 2'-deoxyuridine + NH4(+). This enzyme scavenges exogenous and endogenous cytidine and 2'-deoxycytidine for UMP synthesis. The polypeptide is Cytidine deaminase (Escherichia coli O17:K52:H18 (strain UMN026 / ExPEC)).